The primary structure comprises 49 residues: Large ribosomal subunit protein bL33 (49 aa).

The protein belongs to the bacterial ribosomal protein bL33 family.

This chain is Large ribosomal subunit protein bL33, found in Lachnoclostridium phytofermentans (strain ATCC 700394 / DSM 18823 / ISDg) (Clostridium phytofermentans).